The chain runs to 727 residues: E3 ubiquitin-protein ligase LRSAM1 (727 aa).

LRR repeat units follow at residues 30-51, 56-77, 82-103, 105-126, 128-150, and 151-172; these read ADDI…AFAT, QKKV…SCSL, TIKV…MGQL, VLQV…IGNL, QLQT…GELR, and SLRT…LAHV. The interval 227–248 is disordered; that stretch reads GAENTQDSPDGPASRFSREEAE. A Phosphoserine modification is found at Ser234. Coiled coils occupy residues 241–382 and 469–547; these read RFSR…NLRQ and RQIR…QENY. In terms of domain architecture, SAM spans 569-632; that stretch reads GMERRLVALL…LRRAQDLLAV (64 aa). Phosphoserine is present on Ser604. Short sequence motifs (PTAP motif) lie at residues 653–656 and 665–668; these read PTAP and PSAP. Residues 679-714 form an RING-type zinc finger; that stretch reads CVVCLEREAQMVFLTCGHVCCCQQCCQPLRTCPLCR.

As to quaternary structure, interacts with TSG101. Interacts with PHF23. Interacts with FUS. In terms of processing, ubiquitination promoted by PHF23 leads to proteasomal degradation. Widely expressed.

The protein localises to the cytoplasm. It catalyses the reaction S-ubiquitinyl-[E2 ubiquitin-conjugating enzyme]-L-cysteine + [acceptor protein]-L-lysine = [E2 ubiquitin-conjugating enzyme]-L-cysteine + N(6)-ubiquitinyl-[acceptor protein]-L-lysine.. Its pathway is protein modification; protein ubiquitination. E3 ubiquitin-protein ligase that mediates monoubiquitination of TSG101 at multiple sites, leading to inactivate the ability of TSG101 to sort endocytic (EGF receptors) and exocytic (viral proteins) cargos. Bacterial recognition protein that defends the cytoplasm from invasive pathogens. Localizes to several intracellular bacterial pathogens and generates the bacteria-associated ubiquitin signal leading to autophagy-mediated intracellular bacteria degradation (xenophagy). The protein is E3 ubiquitin-protein ligase LRSAM1 of Mus musculus (Mouse).